We begin with the raw amino-acid sequence, 408 residues long: LL-diaminopimelate aminotransferase (408 aa).

Substrate-binding residues include Tyr-15 and Gly-42. Pyridoxal 5'-phosphate contacts are provided by residues Tyr-72, 108–109 (SK), Tyr-132, Asn-187, Tyr-218, and 246–248 (SFS). Lys-109, Tyr-132, and Asn-187 together coordinate substrate. Position 249 is an N6-(pyridoxal phosphate)lysine (Lys-249). Pyridoxal 5'-phosphate is bound by residues Arg-257 and Asn-292. 2 residues coordinate substrate: Asn-292 and Arg-388.

It belongs to the class-I pyridoxal-phosphate-dependent aminotransferase family. LL-diaminopimelate aminotransferase subfamily. As to quaternary structure, homodimer. The cofactor is pyridoxal 5'-phosphate.

It carries out the reaction (2S,6S)-2,6-diaminopimelate + 2-oxoglutarate = (S)-2,3,4,5-tetrahydrodipicolinate + L-glutamate + H2O + H(+). It functions in the pathway amino-acid biosynthesis; L-lysine biosynthesis via DAP pathway; LL-2,6-diaminopimelate from (S)-tetrahydrodipicolinate (aminotransferase route): step 1/1. Involved in the synthesis of meso-diaminopimelate (m-DAP or DL-DAP), required for both lysine and peptidoglycan biosynthesis. Catalyzes the direct conversion of tetrahydrodipicolinate to LL-diaminopimelate. Is also able to catalyze the reverse reaction in vitro, i.e. the transamination of LL-diaminopimelate with 2-oxoglutarate to produce tetrahydrodipicolinate and glutamate. Cannot use m-DAP, lysine or ornithine as the amino-group donor, when using 2-oxoglutarate as the amino-group acceptor. Cannot use pyruvate, indole 3-pyruvate, oxaloacetate or phenyl pyruvate as the amino-group acceptor, when using LL-DAP as the amino-group donor. In Leptospira interrogans serogroup Icterohaemorrhagiae serovar copenhageni (strain Fiocruz L1-130), this protein is LL-diaminopimelate aminotransferase.